The chain runs to 239 residues: MELNAKPRKSQEKLAEGLIPAVAYNKDNNISFALDRKAFDRAFRQQSTTGLFDITVEGGETFPALVKTVQMDKRRRTPIHVDFYMVTYGEPIEVSVPVHTTGKSQGEIMGGLVDIVLHNLSIVAPGPRRIPQELTVDVSRLNIGDHITAGDVKLPEGCTLAVAADSVVISVLPPRMTADEAAAETQAAQVAGLVAAGELSEEAAAAVLEGDASIEEIKAEAHAAEGTQAEGSTEEGQQQ.

Positions 217–239 (IKAEAHAAEGTQAEGSTEEGQQQ) are disordered. Over residues 229–239 (AEGSTEEGQQQ) the composition is skewed to polar residues.

This sequence belongs to the bacterial ribosomal protein bL25 family. CTC subfamily. In terms of assembly, part of the 50S ribosomal subunit; part of the 5S rRNA/L5/L18/L25 subcomplex. Contacts the 5S rRNA. Binds to the 5S rRNA independently of L5 and L18.

Functionally, this is one of the proteins that binds to the 5S RNA in the ribosome where it forms part of the central protuberance. This chain is Large ribosomal subunit protein bL25, found in Deinococcus deserti (strain DSM 17065 / CIP 109153 / LMG 22923 / VCD115).